Reading from the N-terminus, the 196-residue chain is Probable GTP-binding protein EngB (196 aa).

Positions 24 to 196 (ELSEVALSGR…IWNLIEPYIS (173 aa)) constitute an EngB-type G domain. Residues 32–39 (GRSNVGKS), 59–63 (GKTQT), 77–80 (DVPG), 144–147 (TKED), and 176–178 (YSS) contribute to the GTP site. Residues Ser-39 and Thr-61 each contribute to the Mg(2+) site.

Belongs to the TRAFAC class TrmE-Era-EngA-EngB-Septin-like GTPase superfamily. EngB GTPase family. It depends on Mg(2+) as a cofactor.

Necessary for normal cell division and for the maintenance of normal septation. The polypeptide is Probable GTP-binding protein EngB (Staphylococcus aureus (strain MRSA252)).